A 152-amino-acid polypeptide reads, in one-letter code: Xanthine-guanine phosphoribosyltransferase (152 aa).

5-phospho-alpha-D-ribose 1-diphosphate-binding positions include 37-38 (RG), arginine 69, and 88-96 (DDLVDSGDT). Position 69 (arginine 69) interacts with GMP. Aspartate 89 provides a ligand contact to Mg(2+). Guanine contacts are provided by aspartate 92 and isoleucine 135. Xanthine contacts are provided by aspartate 92 and isoleucine 135. Residues 92-96 (DSGDT) and 134-135 (WI) each bind GMP.

This sequence belongs to the purine/pyrimidine phosphoribosyltransferase family. XGPT subfamily. Homotetramer. The cofactor is Mg(2+).

It is found in the cell inner membrane. It catalyses the reaction GMP + diphosphate = guanine + 5-phospho-alpha-D-ribose 1-diphosphate. The catalysed reaction is XMP + diphosphate = xanthine + 5-phospho-alpha-D-ribose 1-diphosphate. The enzyme catalyses IMP + diphosphate = hypoxanthine + 5-phospho-alpha-D-ribose 1-diphosphate. The protein operates within purine metabolism; GMP biosynthesis via salvage pathway; GMP from guanine: step 1/1. It functions in the pathway purine metabolism; XMP biosynthesis via salvage pathway; XMP from xanthine: step 1/1. Its function is as follows. Purine salvage pathway enzyme that catalyzes the transfer of the ribosyl-5-phosphate group from 5-phospho-alpha-D-ribose 1-diphosphate (PRPP) to the N9 position of the 6-oxopurines guanine and xanthine to form the corresponding ribonucleotides GMP (guanosine 5'-monophosphate) and XMP (xanthosine 5'-monophosphate), with the release of PPi. To a lesser extent, also acts on hypoxanthine. The polypeptide is Xanthine-guanine phosphoribosyltransferase (Aliivibrio fischeri (strain ATCC 700601 / ES114) (Vibrio fischeri)).